The chain runs to 490 residues: Sushi domain-containing protein 4 (490 aa).

The segment at 1–21 (MYHGMNPSNGDGFLEQQQQQQ) is disordered. An N-terminal signal peptide occupies residues 1–41 (MYHGMNPSNGDGFLEQQQQQQQPQSPQRLLAVILWFQLALC). At 42–319 (FGPAQLTGGF…PSTHETLLTT (278 aa)) the chain is on the extracellular side. Sushi domains follow at residues 55-119 (QVCA…ICVQ), 120-179 (EDCR…ICQG), 178-239 (QGCL…RCLA), and 241-304 (EVCP…YCIK). 8 disulfide bridges follow: C57/C99, C85/C117, C122/C165, C147/C177, C180/C224, C210/C237, C243/C289, and C274/C302. N-linked (GlcNAc...) asparagine glycans are attached at residues N104 and N134. Residue N192 is glycosylated (N-linked (GlcNAc...) asparagine). Residues 320-340 (WKIVAFTATSVLLVLLLVILA) traverse the membrane as a helical segment. The Cytoplasmic portion of the chain corresponds to 341-490 (RMFQTKFKAH…DEIPLMEEDP (150 aa)). The segment at 401–490 (GCPLPVDDQS…DEIPLMEEDP (90 aa)) is disordered. Over residues 430 to 456 (CDSVSGSSELLQSLYSPPRCQESTHPA) the composition is skewed to polar residues. Acidic residues predominate over residues 479-490 (IADEIPLMEEDP).

In terms of tissue distribution, isoform 3 is the predominant isoform in all tissues except cortex, cerebellum, kidney, and breast. Isoform 1 is found primarily in the esophagus and the brain.

The protein resides in the membrane. The protein localises to the secreted. Its function is as follows. Acts as a complement inhibitor by disrupting the formation of the classical C3 convertase. Isoform 3 inhibits the classical complement pathway, while membrane-bound isoform 1 inhibits deposition of C3b via both the classical and alternative complement pathways. This chain is Sushi domain-containing protein 4 (SUSD4), found in Homo sapiens (Human).